The primary structure comprises 258 residues: Probable parvulin-type peptidyl-prolyl cis-trans isomerase (258 aa).

Positions 1–19 are cleaved as a signal peptide; that stretch reads MKRIAMLAAACVIAVPAFA. The PpiC domain occupies 127–219; it reads KMEYKVRHIL…FGWHVIQVDD (93 aa).

It belongs to the PpiC/parvulin rotamase family.

The catalysed reaction is [protein]-peptidylproline (omega=180) = [protein]-peptidylproline (omega=0). In Bordetella parapertussis (strain 12822 / ATCC BAA-587 / NCTC 13253), this protein is Probable parvulin-type peptidyl-prolyl cis-trans isomerase.